Here is a 481-residue protein sequence, read N- to C-terminus: Putative F-box/FBD/LRR-repeat protein At5g25850 (481 aa).

The F-box domain maps to 19–69; sequence INRLSQLSDPLICQILSHLPIKEVVTTSVLSTRWKNIWLSVPSLELIYSIF. LRR repeat units follow at residues 123–151, 173–198, and 328–356; these read VRRV…KLFH, VWFP…KIDV, and HVTL…IVAF. Residues 401-452 enclose the FBD domain; it reads QLSFSSVPKCLLSSLQFVELNAQILRFDGEILNLAKYFLENSSILQKLTLHP.

This Arabidopsis thaliana (Mouse-ear cress) protein is Putative F-box/FBD/LRR-repeat protein At5g25850.